A 64-amino-acid polypeptide reads, in one-letter code: Large ribosomal subunit protein eL37 (64 aa).

The C4-type zinc finger occupies 1-6 (GRCSAC). 2 residues coordinate Zn(2+): C3 and C6.

The protein belongs to the eukaryotic ribosomal protein eL37 family. The cofactor is Zn(2+).

Functionally, binds to the 23S rRNA. This Solanum lycopersicum (Tomato) protein is Large ribosomal subunit protein eL37 (RPL37).